Consider the following 351-residue polypeptide: Rhodopsin (351 aa).

The Extracellular portion of the chain corresponds to 1–36 (MNGTEGPYFYVPMVNTTGVVRSPYEYPQYYLVNPAA). N-linked (GlcNAc...) asparagine glycans are attached at residues Asn2 and Asn15. Residues 37–61 (FAVLGAYMFFLIIFGFPINFLTLYV) traverse the membrane as a helical segment. Residues 62-73 (TLEHKKLRTPLN) are Cytoplasmic-facing. Residues 74 to 96 (YILLNLAVADLFMVIGGFTTTMY) form a helical membrane-spanning segment. Residues 97–110 (SSMHGYFVLGRLGC) lie on the Extracellular side of the membrane. The cysteines at positions 110 and 187 are disulfide-linked. The chain crosses the membrane as a helical span at residues 111 to 133 (NLEGFSATLGGMISLWSLAVLAI). The short motif at 134–136 (ERW) is the 'Ionic lock' involved in activated form stabilization element. Residues 134–152 (ERWVVVCKPTSNFRFGENH) lie on the Cytoplasmic side of the membrane. A helical transmembrane segment spans residues 153–173 (AIMGVSLTWTMALACTVPPLV). The Extracellular segment spans residues 174–202 (GWSRYIPEGMQCSCGIDYYTRAEGFNNES). A glycan (N-linked (GlcNAc...) asparagine) is linked at Asn200. A helical transmembrane segment spans residues 203–224 (FVLYMFFCHFMVPLIIIFFCYG). Residues 225–252 (RLLCAVKEAAAAQQESETTQRAEREVTR) are Cytoplasmic-facing. The helical transmembrane segment at 253–274 (MVILMVIGYLVCWLPYASVAWF) threads the bilayer. The Extracellular segment spans residues 275–286 (IFTHQGSEFGPL). A helical transmembrane segment spans residues 287-308 (FMTIPAFFAKSSSIYNPVIYIC). Lys296 bears the N6-(retinylidene)lysine mark. Residues 309-351 (MNKQFRNCMITTLFCGKNPFEGEEEGASSTKTEASSASSVSPA) lie on the Cytoplasmic side of the membrane. Cys323 carries S-palmitoyl cysteine lipidation. The tract at residues 330–351 (GEEEGASSTKTEASSASSVSPA) is disordered. Low complexity predominate over residues 335-351 (ASSTKTEASSASSVSPA).

This sequence belongs to the G-protein coupled receptor 1 family. Opsin subfamily. In terms of processing, phosphorylated on some or all of the serine and threonine residues present in the C-terminal region. Post-translationally, contains one covalently linked retinal chromophore.

Its subcellular location is the membrane. It localises to the cell projection. The protein localises to the cilium. The protein resides in the photoreceptor outer segment. Its function is as follows. Photoreceptor required for image-forming vision at low light intensity. While most salt water fish species use retinal as chromophore, most freshwater fish use 3-dehydroretinal, or a mixture of retinal and 3-dehydroretinal. Light-induced isomerization of 11-cis to all-trans retinal triggers a conformational change that activates signaling via G-proteins. Subsequent receptor phosphorylation mediates displacement of the bound G-protein alpha subunit by arrestin and terminates signaling. The sequence is that of Rhodopsin (rho) from Neoniphon sammara (Spotfin squirrelfish).